Consider the following 590-residue polypeptide: FAD-linked oxidoreductase malF (590 aa).

An N-terminal signal peptide occupies residues 1–18; it reads MKYTATFALLILAIGIQT. N-linked (GlcNAc...) asparagine glycosylation is found at asparagine 44, asparagine 80, asparagine 103, asparagine 178, and asparagine 396. An FAD-binding PCMH-type domain is found at 117 to 303; it reads AQGRIPLYSA…TSVTLRAFAD (187 aa).

Belongs to the oxygen-dependent FAD-linked oxidoreductase family. Requires FAD as cofactor.

FAD-linked oxidoreductase; part of the gene cluster that mediates the biosynthesis of malbrancheamide, a dichlorinated fungal indole alkaloid that belongs to a family of natural products containing a characteristic bicyclo[2.2.2]diazaoctane core. The first step of malbrancheamide biosynthesis involves coupling of L-proline and L-tryptophan by malG, a bimodular NRPS, to produce L-Pro-L-Trp aldehyde through reductive offloading. This compound undergoes spontaneous cyclization and dehydration to give a dienamine which is reverse prenylated at C-2 by malE. The other prenyltransferase present in the cluster, malB, displays modest activity, suggesting that may be a redundant gene in the pathway. Subsequently, a [4+2] Diels-Alder cyclo-addition catalyzed by the bifunctional enzyme malC forms the characteristic bicyclo[2.2.2]diazaoctane ring of premalbrancheamid. Finally, the flavin-dependent halogenase malA catalyzes the iterative dichlorination of the indole ring of premalbrancheamide to yield C-9 monochlorinated malbrancheamide B, C-8 monochlorinated isomalbrancheamide B, and dichlorinated malbrancheamide. MalA is also able to brominate premalbrancheamide at C-9 to yield malbrancheamide C, and, to a lesser extend, at C-8 to yield isomalbrancheamide C. Finally, malA can brominate C-9 monochlorinated malbrancheamide B at C-8 to yield malbrancheamide D, or C-8 monochlorinated isomalbrancheamide B at C-9 to produce isomalbrancheamide D. This is FAD-linked oxidoreductase malF from Malbranchea aurantiaca.